A 621-amino-acid chain; its full sequence is E3 SUMO-protein ligase PIAS2 (621 aa).

The region spanning 11–45 (VSSFRVSELQVLLGFAGRNKSGRKHDLLMRALHLL) is the SAP domain. The LXXLL motif signature appears at 19-23 (LQVLL). Residues Lys46 and Lys249 each participate in a glycyl lysine isopeptide (Lys-Gly) (interchain with G-Cter in SUMO2) cross-link. The PINIT domain occupies 134–299 (QPSPPIPPVH…SMSVYLVRQL (166 aa)). The segment at 331–412 (PDSEIATTSL…FMEILNDCSD (82 aa)) adopts an SP-RING-type zinc-finger fold. Zn(2+) contacts are provided by Cys362, His364, Cys385, and Cys388. Residues Lys430, Lys435, Lys443, and Lys452 each participate in a glycyl lysine isopeptide (Lys-Gly) (interchain with G-Cter in SUMO2) cross-link. The tract at residues 467-473 (IDVIDLT) is SUMO1-binding. 3 positions are modified to phosphoserine: Ser476, Ser477, and Ser478. Positions 484–492 (PPAKRKCIF) match the Nuclear localization signal motif. Lys489 is covalently cross-linked (Glycyl lysine isopeptide (Lys-Gly) (interchain with G-Cter in SUMO2)). A Phosphoserine modification is found at Ser499. Lys502 is covalently cross-linked (Glycyl lysine isopeptide (Lys-Gly) (interchain with G-Cter in SUMO2)). Over residues 577–610 (TASSTSVTTTSPHESSTHVSSSSSRSETGVITSS) the composition is skewed to low complexity. The interval 577–621 (TASSTSVTTTSPHESSTHVSSSSSRSETGVITSSGRNIPDIISLD) is disordered.

It belongs to the PIAS family. In terms of assembly, binds SUMO1 and UBE2I. Interacts with AXIN1, JUN, MDM2, PARK7, TP53 and TP73 isoform alpha, but not TP73 isoform beta. Interacts with STAT4 following IL12 and IFN-alpha stimulation of T-cells. Interacts also with GTF2I, GTF2IRD1, IKFZ1, DAB2 and MSX2, as well as with several steroid receptors, including ESR1, ESR2, NR3C1, PGR, AR, and with NCOA2. Sumoylation of a target protein seems to enhance the interaction. Binds to sumoylated ELK1. Interacts with PLAG1. Binds DNA, such as CDKN1A promoter, in a sequence-specific manner. Interacts with KLF8; the interaction results in SUMO ligation and repression of KLF8 transcriptional activity and of its cell cycle progression into G(1) phase. Interacts with IFIH1/MDA5. Interacts with PML. Interacts with PRDM1. Post-translationally, sumoylated.

It is found in the nucleus speckle. Its subcellular location is the nucleus. The protein localises to the PML body. It carries out the reaction S-ubiquitinyl-[E2 ubiquitin-conjugating enzyme]-L-cysteine + [acceptor protein]-L-lysine = [E2 ubiquitin-conjugating enzyme]-L-cysteine + N(6)-ubiquitinyl-[acceptor protein]-L-lysine.. It functions in the pathway protein modification; protein sumoylation. Functions as an E3-type small ubiquitin-like modifier (SUMO) ligase, stabilizing the interaction between UBE2I and the substrate, and as a SUMO-tethering factor. Plays a crucial role as a transcriptional coregulation in various cellular pathways, including the STAT pathway, the p53 pathway and the steroid hormone signaling pathway. The effects of this transcriptional coregulation, transactivation or silencing may vary depending upon the biological context and PIAS2 isoform studied. However, it seems to be mostly involved in gene silencing. Binds to sumoylated ELK1 and enhances its transcriptional activity by preventing recruitment of HDAC2 by ELK1, thus reversing SUMO-mediated repression of ELK1 transactivation activity. Isoform PIASx-beta, but not isoform PIASx-alpha, promotes MDM2 sumoylation. Isoform PIASx-alpha promotes PARK7 sumoylation. Isoform PIASx-beta promotes NCOA2 sumoylation more efficiently than isoform PIASx-alpha. Sumoylates PML at'Lys-65' and 'Lys-160'. This is E3 SUMO-protein ligase PIAS2 (Pias2) from Mus musculus (Mouse).